The chain runs to 83 residues: MANHKSALKRIRSNEKRRVLNRYQHKTTRNAIKALRLATDKSDAAAKLSTVISMIDKLAKKNIIHDNKASNLKSKLTKHVAKL.

This sequence belongs to the bacterial ribosomal protein bS20 family.

Functionally, binds directly to 16S ribosomal RNA. The sequence is that of Small ribosomal subunit protein bS20 from Flavobacterium johnsoniae (strain ATCC 17061 / DSM 2064 / JCM 8514 / BCRC 14874 / CCUG 350202 / NBRC 14942 / NCIMB 11054 / UW101) (Cytophaga johnsonae).